The chain runs to 180 residues: UPF0227 protein YE1706 (180 aa).

It belongs to the UPF0227 family.

This Yersinia enterocolitica serotype O:8 / biotype 1B (strain NCTC 13174 / 8081) protein is UPF0227 protein YE1706.